The primary structure comprises 332 residues: Aspartate carbamoyltransferase catalytic subunit (332 aa).

Carbamoyl phosphate contacts are provided by Arg-78 and Thr-79. Position 106 (Lys-106) interacts with L-aspartate. The carbamoyl phosphate site is built by Arg-128, His-156, and Gln-159. The L-aspartate site is built by Arg-189 and Arg-243. Residues Gly-284 and Pro-285 each contribute to the carbamoyl phosphate site.

Belongs to the aspartate/ornithine carbamoyltransferase superfamily. ATCase family. In terms of assembly, heterododecamer (2C3:3R2) of six catalytic PyrB chains organized as two trimers (C3), and six regulatory PyrI chains organized as three dimers (R2).

It carries out the reaction carbamoyl phosphate + L-aspartate = N-carbamoyl-L-aspartate + phosphate + H(+). Its pathway is pyrimidine metabolism; UMP biosynthesis via de novo pathway; (S)-dihydroorotate from bicarbonate: step 2/3. Functionally, catalyzes the condensation of carbamoyl phosphate and aspartate to form carbamoyl aspartate and inorganic phosphate, the committed step in the de novo pyrimidine nucleotide biosynthesis pathway. The chain is Aspartate carbamoyltransferase catalytic subunit from Caulobacter vibrioides (strain ATCC 19089 / CIP 103742 / CB 15) (Caulobacter crescentus).